We begin with the raw amino-acid sequence, 188 residues long: Killer cell lectin-like receptor subfamily G member 1 (188 aa).

At 1 to 33 the chain is on the cytoplasmic side; the sequence is MADSSIYSTLELPEAPQVQDESRWKLKAVLHRP. The ITIM motif motif lies at 5–10; it reads SIYSTL. A helical; Signal-anchor for type II membrane protein membrane pass occupies residues 34–56; that stretch reads HLSRFAMVALGLLTVILMSLLMY. Topologically, residues 57 to 188 are extracellular; that stretch reads QRILCCGSKD…LQWICKKVLY (132 aa). C75 and C86 are disulfide-bonded. Residues N82 and N97 are each glycosylated (N-linked (GlcNAc...) asparagine). Residues 82–184 enclose the C-type lectin domain; sequence NGSHCYYFSM…CEVALQWICK (103 aa). 2 disulfides stabilise this stretch: C103–C183 and C162–C175.

Forms a monomer and homodimer; disulfide-linked. Interacts (via ITIM motif) with PTPN11 and INPP5D. Post-translationally, phosphorylated in response to monoclonal antibody G63 binding and antigenic stimulation. As to expression, expressed specifically on natural killer (NK) cells and activated CD8 T-cells. Not detected in spleen, thymus, lymph node, testis, brain or kidney. Not detected on mast cell lines, bone marrow-derived mast cells, or peritoneal mast cells.

The protein localises to the cell membrane. Plays an inhibitory role on natural killer (NK) cells and T-cell functions upon binding to their non-MHC ligands. May mediate missing self recognition by binding to a highly conserved site on classical cadherins, enabling it to monitor expression of E-cadherin/CDH1, N-cadherin/CDH2 and R-cadherin/CDH4 on target cells. In Mus musculus (Mouse), this protein is Killer cell lectin-like receptor subfamily G member 1 (Klrg1).